Here is a 361-residue protein sequence, read N- to C-terminus: UDP-N-acetylglucosamine--N-acetylmuramyl-(pentapeptide) pyrophosphoryl-undecaprenol N-acetylglucosamine transferase (361 aa).

Residues threonine 11 to glycine 13, asparagine 120, arginine 161, serine 188, and glutamine 282 each bind UDP-N-acetyl-alpha-D-glucosamine.

This sequence belongs to the glycosyltransferase 28 family. MurG subfamily.

The protein resides in the cell inner membrane. It catalyses the reaction di-trans,octa-cis-undecaprenyl diphospho-N-acetyl-alpha-D-muramoyl-L-alanyl-D-glutamyl-meso-2,6-diaminopimeloyl-D-alanyl-D-alanine + UDP-N-acetyl-alpha-D-glucosamine = di-trans,octa-cis-undecaprenyl diphospho-[N-acetyl-alpha-D-glucosaminyl-(1-&gt;4)]-N-acetyl-alpha-D-muramoyl-L-alanyl-D-glutamyl-meso-2,6-diaminopimeloyl-D-alanyl-D-alanine + UDP + H(+). It participates in cell wall biogenesis; peptidoglycan biosynthesis. Cell wall formation. Catalyzes the transfer of a GlcNAc subunit on undecaprenyl-pyrophosphoryl-MurNAc-pentapeptide (lipid intermediate I) to form undecaprenyl-pyrophosphoryl-MurNAc-(pentapeptide)GlcNAc (lipid intermediate II). The sequence is that of UDP-N-acetylglucosamine--N-acetylmuramyl-(pentapeptide) pyrophosphoryl-undecaprenol N-acetylglucosamine transferase from Prochlorococcus marinus (strain MIT 9303).